The following is a 571-amino-acid chain: MRTSNYLLSTLKETPNDAEVISHQLMLRAGMIRKLASGLYTWLPTGLRVLRKVENIVRQEIDNAGAVEILMPVVQPFELWEETGRSEKMGPELLRFTDRHSRPFVLSPTAEEVVTSLVRNEISSYKQLPLNLYQIQTKFRDERRPRFGVMRAREFSMMDAYSFDIDKEGLEKSYQAMHDAYCKAFDRMGLEYRPVLADSGAIGGSGSQEFHVLAESGEDLIAFSSDSDYAANIEKAEALAPTAELAAATQEMELVDTPNAKTIAELVEQHGLAIEKTVKTLFVKASDEIDADIVALIIRGDHELNEVKAENLPQVASPLEMAEEAEIRALIGAGPGSLGPVGLELPFIVDRTVAIMSDFGAGANVDGKHYFGINWGRDVELAQVEDLRNVVEGDLSPCGQGTIQLKRGIEVGHIFQLGTNYSKKMNCNVLGPDGKSATLEMGCYGIGVSRIVASAIEQNNDENGIIWPTALAPFQVAIVPMNMAKSEEVKAAAESLYAELTAAGIEVLFDDRKERPGVMFKDIELIGIPHTIVIGNRSLENGEMEYKDRRDGNKVAVPVADVVEMIKQKLA.

Belongs to the class-II aminoacyl-tRNA synthetase family. ProS type 1 subfamily. In terms of assembly, homodimer.

Its subcellular location is the cytoplasm. It catalyses the reaction tRNA(Pro) + L-proline + ATP = L-prolyl-tRNA(Pro) + AMP + diphosphate. Its function is as follows. Catalyzes the attachment of proline to tRNA(Pro) in a two-step reaction: proline is first activated by ATP to form Pro-AMP and then transferred to the acceptor end of tRNA(Pro). As ProRS can inadvertently accommodate and process non-cognate amino acids such as alanine and cysteine, to avoid such errors it has two additional distinct editing activities against alanine. One activity is designated as 'pretransfer' editing and involves the tRNA(Pro)-independent hydrolysis of activated Ala-AMP. The other activity is designated 'posttransfer' editing and involves deacylation of mischarged Ala-tRNA(Pro). The misacylated Cys-tRNA(Pro) is not edited by ProRS. This is Proline--tRNA ligase from Photobacterium profundum (strain SS9).